We begin with the raw amino-acid sequence, 780 residues long: Semaphorin-3G (780 aa).

The first 22 residues, 1–22 (MDPSAWAICCLLGSLLFHVGIP), serve as a signal peptide directing secretion. Positions 32-519 (RLRLSYRDLL…SPLGVARLQL (488 aa)) constitute a Sema domain. N-linked (GlcNAc...) asparagine glycosylation occurs at Asn44. Cys105 and Cys116 are oxidised to a cystine. Asn127 carries N-linked (GlcNAc...) asparagine glycosylation. 5 disulfide bridges follow: Cys134-Cys143, Cys270-Cys382, Cys294-Cys342, Cys522-Cys540, and Cys603-Cys655. One can recognise an Ig-like C2-type domain in the interval 569–671 (PAVQCLGQGQ…FSQTVVRFAL (103 aa)). Asn652 carries N-linked (GlcNAc...) asparagine glycosylation.

It belongs to the semaphorin family. Highly expressed in lung and kidney. Weakly expressed in brain.

The protein localises to the secreted. Functionally, has chemorepulsive activities for sympathetic axons. Ligand of NRP2. In Mus musculus (Mouse), this protein is Semaphorin-3G (Sema3g).